A 366-amino-acid polypeptide reads, in one-letter code: Histone-lysine N-methyltransferase SETD7 (366 aa).

MORN repeat units lie at residues 36–58 (FEGN…DGST), 59–81 (LEGY…DGGV), and 106–128 (FKGQ…DGGS). Positions 214 to 336 (ERVYVAESLI…ADEELTVAYG (123 aa)) constitute an SET domain. S-adenosyl-L-methionine contacts are provided by residues 226-228 (AGE), N296, H297, and E356.

This sequence belongs to the class V-like SAM-binding methyltransferase superfamily. Histone-lysine methyltransferase family. SET7 subfamily. Interacts with IPF1/PDX-1. Widely expressed. Expressed in pancreatic islets.

The protein resides in the nucleus. It is found in the chromosome. It carries out the reaction L-lysyl(4)-[histone H3] + S-adenosyl-L-methionine = N(6)-methyl-L-lysyl(4)-[histone H3] + S-adenosyl-L-homocysteine + H(+). It catalyses the reaction L-lysyl-[protein] + S-adenosyl-L-methionine = N(6)-methyl-L-lysyl-[protein] + S-adenosyl-L-homocysteine + H(+). In terms of biological role, histone methyltransferase that specifically monomethylates 'Lys-4' of histone H3. H3 'Lys-4' methylation represents a specific tag for epigenetic transcriptional activation. Plays a central role in the transcriptional activation of genes such as collagenase or insulin. Recruited by IPF1/PDX-1 to the insulin promoter, leading to activate transcription. Also has methyltransferase activity toward non-histone proteins such as CGAS, p53/TP53, TAF10, and possibly TAF7 by recognizing and binding the [KR]-[STA]-K in substrate proteins. Monomethylates 'Lys-189' of TAF10, leading to increase the affinity of TAF10 for RNA polymerase II. Monomethylates 'Lys-372' of p53/TP53, stabilizing p53/TP53 and increasing p53/TP53-mediated transcriptional activation. Monomethylates 'Lys-491' of CGAS, promoting interaction between SGF29 and CGAS. This is Histone-lysine N-methyltransferase SETD7 (SETD7) from Homo sapiens (Human).